A 195-amino-acid chain; its full sequence is MKIGIVTGIPGVGKTTVLSFADKILTEKGIPHKIANYGDYMLNTALKEGYVNSRDEIRKLQIEKQRELQALAARRIVEDLSLLGDEGIGLIDTHAVIRTPAGYLPGLPRHVIEVLSPKVIFLLEADPRIILERQKRDNSRARADYSDTTVINEVIQFARYSAMASAVLVGASVKVVINQEGDPSIAASDIINSLM.

Position 8–16 (glycine 8–threonine 16) interacts with ATP.

Belongs to the archaeal adenylate kinase family.

It localises to the cytoplasm. It catalyses the reaction AMP + ATP = 2 ADP. The chain is Adenylate kinase from Saccharolobus islandicus (strain M.14.25 / Kamchatka #1) (Sulfolobus islandicus).